Here is a 159-residue protein sequence, read N- to C-terminus: ATP synthase subunit b (159 aa).

Residues 2–22 (NISIPQIIAAILNFIILLLIV) traverse the membrane as a helical segment.

The protein belongs to the ATPase B chain family. In terms of assembly, F-type ATPases have 2 components, F(1) - the catalytic core - and F(0) - the membrane proton channel. F(1) has five subunits: alpha(3), beta(3), gamma(1), delta(1), epsilon(1). F(0) has three main subunits: a(1), b(2) and c(10-14). The alpha and beta chains form an alternating ring which encloses part of the gamma chain. F(1) is attached to F(0) by a central stalk formed by the gamma and epsilon chains, while a peripheral stalk is formed by the delta and b chains.

It localises to the cell membrane. Functionally, f(1)F(0) ATP synthase produces ATP from ADP in the presence of a proton or sodium gradient. F-type ATPases consist of two structural domains, F(1) containing the extramembraneous catalytic core and F(0) containing the membrane proton channel, linked together by a central stalk and a peripheral stalk. During catalysis, ATP synthesis in the catalytic domain of F(1) is coupled via a rotary mechanism of the central stalk subunits to proton translocation. In terms of biological role, component of the F(0) channel, it forms part of the peripheral stalk, linking F(1) to F(0). The polypeptide is ATP synthase subunit b (Clostridium botulinum (strain ATCC 19397 / Type A)).